The primary structure comprises 1083 residues: MTAELQQDDAAGAADGHGSSCQMLLNQLREITGIQDPSFLHEALKASNGDITQAVSLLTDQRVKEPSHDTAATEPSEVEESATSKDLLAKVIDLTHDNKDDLQAAIALSLLESPNIQTDSRDLNRIHEANSAETKRSKRKRCEVWGENHNPNNWRRVDGWPVGLKNVGNTCWFSAVIQSLFQLPEFRRLVLSYSLPQNILENCRSHTEKRNIMFMQELQYLFALLLGSNRKFVDPSAALDLLKGAFRSSEEQQQDVSEFTHKLLDWLEDAFQLAVNVNSNPRTKSENPMVQLFYGTFLTEGVREGKPFCNNETFGQYPLQVNGYHNLDECLEGAMVEGDIALLPSDRSVKYGQERWFTKLPPVLTFELSRFEFNQSLGQPEKIHNKLEFPQVIYMDRYMYKSKELIRSKRESIRKLKEEIQVLQQKLERYVKYGSGPSRFPLPDMLKYVIEFASTKPASESCLSGSVEHMTLPLPSVHCPISDLTAKESSSPKSCSQNAEGSFSSPEDALPNSEVMNGPFTSPHSSLEMPAPPPAPRTVTDEEMNFVKTCLQRWRSEIEQDIQDLKNCISSTTQAIEQMYCDPLLRQVPYRLHAVLVHEGQASAGHYWAYIYNQPRQIWLKYNDISVTESSWEELERDSYGGLRNVSAYCLMYINDKLPHCSAEAAHGESDQTAEVEALSVELRQYIQEDNWRFEQEVEEWEEEQSCKIPQMESSPNSSSQDFSTSQESSAASSHGVRCLSSEHAVIAKEQTAQAIANTAHAYEKSGVEAALSEVMLSPAMQGVLLAIAKARQTFDRDGSEAGLIKAFHEEYSRLYQLAKETPTSHSDPRLQHVLVYFFQNEAPKRVVERTLLEQFADRNLSYDERSISIMKVAQAKLMEIGPEDMNMEEYKRWHEDYSLFRKVSVYLLTGLELFQKGKYQEALSYLVYAYQSNAGLLVKGPRRGVKESVIALYRRKCLLELNAKAASLFETNDDHSVTEGINVMNELIIPCIHLIINNDISKDDLDAIEVMRNHWCSYLGKDIAENLQLCLGEFLPRLLDPSAEIIVLKEPPTIRPNSPYDLCSRFAAVMESIQGVSTVTVK.

The interval 60–82 (DQRVKEPSHDTAATEPSEVEESA) is disordered. The residue at position 67 (Ser-67) is a Phosphoserine. The region spanning 97-116 (DNKDDLQAAIALSLLESPNI) is the UIM domain. Residue Lys-99 forms a Glycyl lysine isopeptide (Lys-Gly) (interchain with G-Cter in SUMO2) linkage. The USP domain maps to 162–656 (VGLKNVGNTC…SAYCLMYIND (495 aa)). Residue Cys-171 is the Nucleophile of the active site. Residue Ser-376 is modified to Phosphoserine. Residues 483-539 (DLTAKESSSPKSCSQNAEGSFSSPEDALPNSEVMNGPFTSPHSSLEMPAPPPAPRTV) form a disordered region. Positions 487–505 (KESSSPKSCSQNAEGSFSS) are enriched in polar residues. Residue Ser-556 is modified to Phosphoserine. Residue His-606 is the Proton acceptor of the active site. The disordered stretch occupies residues 703–728 (EEQSCKIPQMESSPNSSSQDFSTSQE). Over residues 714-728 (SSPNSSSQDFSTSQE) the composition is skewed to low complexity. Ser-720 is modified (phosphoserine). Thr-1054 carries the post-translational modification Phosphothreonine.

Belongs to the peptidase C19 family. USP28 subfamily. In terms of assembly, interacts with ZNF304. Interacts with PRKD1. Interacts with TP53BP1. Interacts with FBXW7; following DNA damage, dissociates from FBXW7 leading to degradation of MYC. Post-translationally, degraded upon nickel ion level or hypoxia exposure. In terms of processing, phosphorylated upon DNA damage at Ser-67 and Ser-720, by ATM or ATR. Phosphorylated by PRKD1.

It is found in the nucleus. It localises to the nucleoplasm. The catalysed reaction is Thiol-dependent hydrolysis of ester, thioester, amide, peptide and isopeptide bonds formed by the C-terminal Gly of ubiquitin (a 76-residue protein attached to proteins as an intracellular targeting signal).. Deubiquitinase involved in DNA damage response checkpoint and MYC proto-oncogene stability. Involved in DNA damage induced apoptosis by specifically deubiquitinating proteins of the DNA damage pathway such as CLSPN. Also involved in G2 DNA damage checkpoint, by deubiquitinating CLSPN, and preventing its degradation by the anaphase promoting complex/cyclosome (APC/C). In contrast, it does not deubiquitinate PLK1. Specifically deubiquitinates MYC in the nucleoplasm, leading to prevent MYC degradation by the proteasome: acts by specifically interacting with FBXW7 (FBW7alpha) in the nucleoplasm and counteracting ubiquitination of MYC by the SCF(FBXW7) complex. Deubiquitinates ZNF304, hence preventing ZNF304 degradation by the proteasome and leading to the activated KRAS-mediated promoter hypermethylation and transcriptional silencing of tumor suppressor genes (TSGs) in a subset of colorectal cancers (CRC) cells. The polypeptide is Ubiquitin carboxyl-terminal hydrolase 28 (Usp28) (Rattus norvegicus (Rat)).